Reading from the N-terminus, the 356-residue chain is Tungsten-containing aldehyde ferredoxin oxidoreductase cofactor-modifying protein (356 aa).

Residues 1 to 214 (MKYLYLEITS…PIVNELYKIA (214 aa)) form the Radical SAM core domain. 3 residues coordinate [4Fe-4S] cluster: Cys-12, Cys-16, and Cys-19.

Belongs to the radical SAM superfamily. It depends on [4Fe-4S] cluster as a cofactor.

Involved in the biosynthesis of a molybdopterin-based tungsten cofactor. This Pyrococcus furiosus (strain ATCC 43587 / DSM 3638 / JCM 8422 / Vc1) protein is Tungsten-containing aldehyde ferredoxin oxidoreductase cofactor-modifying protein (cmo).